The following is a 1309-amino-acid chain: Putative receptor-type tyrosine-protein phosphatase mosPTP-1 (1309 aa).

An N-terminal signal peptide occupies residues 1-36 (MNSAPRNAGAARSVDRRGFIAACGLLVLLVVRMLGA). The Extracellular portion of the chain corresponds to 37 to 572 (ADATRIFDIE…RQVYDDYNLA (536 aa)). Residues N60, N107, N162, N257, N353, N389, N455, N501, and N513 are each glycosylated (N-linked (GlcNAc...) asparagine). 4 consecutive Fibronectin type-III domains span residues 147 to 244 (PPGR…TLRE), 249 to 347 (KPVT…DEGV), 350 to 449 (KPLN…SGPS), and 450 to 553 (APKV…LQLH). The chain crosses the membrane as a helical span at residues 573 to 593 (VLGGIVFSCFGLLLIVLSFLL). Residues 594 to 1309 (WKKCFHAAYY…NHLNLDHNQS (716 aa)) lie on the Cytoplasmic side of the membrane. Tyrosine-protein phosphatase domains are found at residues 656–921 (FSKE…LVEA) and 944–1196 (IDNQ…LSYM). C862 serves as the catalytic Phosphocysteine intermediate. Positions 1239–1269 (NSGDGGGNGNDGVPTGNGTNGGLPMSGGGTT) are disordered. A compositionally biased stretch (gly residues) spans 1256 to 1268 (GTNGGLPMSGGGT).

It belongs to the protein-tyrosine phosphatase family. Receptor class subfamily. Interacts with C-type lectin mosGCTL-1; the interaction probably mediates the recruitment of West Nile virus particles in complex with C-type lectin mosGCTL-1 to the cell surface. Interacts with C-type lectin mosGCTL-7; the interaction probably mediates the recruitment of Japanese encephalitis virus particles in complex with C-type lectin mosGCTL-7 to the cell surface. In terms of tissue distribution, salivary gland (at protein level). Hemolymph. Low-level expression in midgut.

The protein resides in the cell membrane. It catalyses the reaction O-phospho-L-tyrosyl-[protein] + H2O = L-tyrosyl-[protein] + phosphate. Functionally, putative protein tyrosine-protein phosphatase. In terms of biological role, (Microbial infection) Facilitates West Nile virus infection in mosquitoes probably via recruiting West Nile virus particles in complex with C-type lectin mosGCTL-1 to the cell surface. Its function is as follows. (Microbial infection) Facilitates Japanese encephalitis virus infection in mosquitoes probably via recruiting Japanese encephalitis virus particles in complex with C-type lectin mosGCTL-7 to the cell surface. The sequence is that of Putative receptor-type tyrosine-protein phosphatase mosPTP-1 from Aedes aegypti (Yellowfever mosquito).